A 486-amino-acid chain; its full sequence is Malonate-semialdehyde dehydrogenase (486 aa).

NAD(+) contacts are provided by Phe-154, Lys-178, Glu-181, Arg-182, and Ser-231. Catalysis depends on Cys-286, which acts as the Nucleophile. Glu-386 contributes to the NAD(+) binding site.

Belongs to the aldehyde dehydrogenase family. IolA subfamily. Homotetramer.

It carries out the reaction 3-oxopropanoate + NAD(+) + CoA + H2O = hydrogencarbonate + acetyl-CoA + NADH + H(+). The catalysed reaction is 2-methyl-3-oxopropanoate + NAD(+) + CoA + H2O = propanoyl-CoA + hydrogencarbonate + NADH + H(+). Its pathway is polyol metabolism; myo-inositol degradation into acetyl-CoA; acetyl-CoA from myo-inositol: step 7/7. Its function is as follows. Catalyzes the oxidation of malonate semialdehyde (MSA) and methylmalonate semialdehyde (MMSA) into acetyl-CoA and propanoyl-CoA, respectively. Is involved in a myo-inositol catabolic pathway. Bicarbonate, and not CO2, is the end-product of the enzymatic reaction. In Bacillus cytotoxicus (strain DSM 22905 / CIP 110041 / 391-98 / NVH 391-98), this protein is Malonate-semialdehyde dehydrogenase.